A 529-amino-acid chain; its full sequence is GMP synthase [glutamine-hydrolyzing] (529 aa).

Residues 3–204 (TVAIVDFGSQ…FLKIAGCTRD (202 aa)) form the Glutamine amidotransferase type-1 domain. Cysteine 87 (nucleophile) is an active-site residue. Catalysis depends on residues histidine 179 and glutamate 181. Residues 205 to 395 (WTMGSFLHTQ…LGLPSAILDR (191 aa)) form the GMPS ATP-PPase domain. Residue 232–238 (SGGVDSS) coordinates ATP.

As to quaternary structure, homodimer.

The enzyme catalyses XMP + L-glutamine + ATP + H2O = GMP + L-glutamate + AMP + diphosphate + 2 H(+). Its pathway is purine metabolism; GMP biosynthesis; GMP from XMP (L-Gln route): step 1/1. Functionally, catalyzes the synthesis of GMP from XMP. The sequence is that of GMP synthase [glutamine-hydrolyzing] from Anaplasma marginale (strain St. Maries).